The following is a 236-amino-acid chain: MNKTELLHEGKAKKVFLTDNKDLVIQEFKDDATAFNNKKKGTIGNKGVVNNAISCKLFTYLAEHGVSTHFVEKLSDRDMLCKRLDIILVEVVVRNTAAGSLVRRYGFEEGFRLEDPIIELYLKDDDLDDPLMNESHAVALGLANYEELELLKEQAATINTLLKTFFAGRKLNLVDFKLEFGRHNGEILLGDEISPDTCRFWDLDTGEKMDKDRFRFDLGGVEDAYTEVQHRVLDLP.

It belongs to the SAICAR synthetase family.

The enzyme catalyses 5-amino-1-(5-phospho-D-ribosyl)imidazole-4-carboxylate + L-aspartate + ATP = (2S)-2-[5-amino-1-(5-phospho-beta-D-ribosyl)imidazole-4-carboxamido]succinate + ADP + phosphate + 2 H(+). Its pathway is purine metabolism; IMP biosynthesis via de novo pathway; 5-amino-1-(5-phospho-D-ribosyl)imidazole-4-carboxamide from 5-amino-1-(5-phospho-D-ribosyl)imidazole-4-carboxylate: step 1/2. In Chlorobium phaeobacteroides (strain BS1), this protein is Phosphoribosylaminoimidazole-succinocarboxamide synthase.